The following is a 161-amino-acid chain: Vasotocin-neurophysin VT (161 aa).

An N-terminal signal peptide occupies residues 1–22 (MSAMGWTLLAAALLAISAQSNG). A disulfide bridge connects residues Cys23 and Cys28. The residue at position 31 (Gly31) is a Glycine amide. Cystine bridges form between Cys43-Cys91, Cys46-Cys58, Cys52-Cys81, Cys59-Cys71, Cys99-Cys111, Cys105-Cys123, and Cys112-Cys117.

Belongs to the vasopressin/oxytocin family.

Its subcellular location is the secreted. Its function is as follows. Vasotocin is an antidiuretic hormone. This chain is Vasotocin-neurophysin VT, found in Eptatretus stoutii (Pacific hagfish).